The chain runs to 488 residues: 26S proteasome non-ATPase regulatory subunit 3 homolog A (488 aa).

One can recognise a PCI domain in the interval 240–421; the sequence is CRYLFYLGKI…GCMVSKETGD (182 aa). Residues 451 to 488 form a disordered region; sequence RFPPNTHKEKESDEKRRERKQQEEELAKHMAEEDDDDF. The span at 456–481 shows a compositional bias: basic and acidic residues; that stretch reads THKEKESDEKRRERKQQEEELAKHMA.

Belongs to the proteasome subunit S3 family. Component of the 19S regulatory particle (RP/PA700) lid subcomplex of the 26S proteasome. The 26S proteasome is composed of a core protease (CP), known as the 20S proteasome, capped at one or both ends by the 19S regulatory particle (RP/PA700). The RP/PA700 complex is composed of at least 17 different subunits in two subcomplexes, the base and the lid, which form the portions proximal and distal to the 20S proteolytic core, respectively. Interacts with UCH1 and UCH2. As to expression, ubiquitous with highest expression in flowers.

Functionally, acts as a regulatory subunit of the 26 proteasome which is involved in the ATP-dependent degradation of ubiquitinated proteins. This chain is 26S proteasome non-ATPase regulatory subunit 3 homolog A, found in Arabidopsis thaliana (Mouse-ear cress).